The following is a 598-amino-acid chain: Proline--tRNA ligase (598 aa).

Belongs to the class-II aminoacyl-tRNA synthetase family. ProS type 1 subfamily. As to quaternary structure, homodimer.

Its subcellular location is the cytoplasm. It carries out the reaction tRNA(Pro) + L-proline + ATP = L-prolyl-tRNA(Pro) + AMP + diphosphate. Functionally, catalyzes the attachment of proline to tRNA(Pro) in a two-step reaction: proline is first activated by ATP to form Pro-AMP and then transferred to the acceptor end of tRNA(Pro). As ProRS can inadvertently accommodate and process non-cognate amino acids such as alanine and cysteine, to avoid such errors it has two additional distinct editing activities against alanine. One activity is designated as 'pretransfer' editing and involves the tRNA(Pro)-independent hydrolysis of activated Ala-AMP. The other activity is designated 'posttransfer' editing and involves deacylation of mischarged Ala-tRNA(Pro). The misacylated Cys-tRNA(Pro) is not edited by ProRS. The sequence is that of Proline--tRNA ligase from Synechococcus sp. (strain CC9311).